Consider the following 210-residue polypeptide: Outer-membrane lipoprotein carrier protein (210 aa).

Positions 1–22 (MRAFKWALAIGATLALPLTAQA) are cleaved as a signal peptide.

The protein belongs to the LolA family. Monomer.

It localises to the periplasm. Functionally, participates in the translocation of lipoproteins from the inner membrane to the outer membrane. Only forms a complex with a lipoprotein if the residue after the N-terminal Cys is not an aspartate (The Asp acts as a targeting signal to indicate that the lipoprotein should stay in the inner membrane). The chain is Outer-membrane lipoprotein carrier protein from Chromohalobacter salexigens (strain ATCC BAA-138 / DSM 3043 / CIP 106854 / NCIMB 13768 / 1H11).